The primary structure comprises 406 residues: Lysosome-associated membrane glycoprotein 1 (406 aa).

Residues 1–24 (MAAPGARRPLLLLLLAGLAHGASA) form the signal peptide. The tract at residues 25 to 188 (LFEVKNNGTT…SKEETHCTQD (164 aa)) is first lumenal domain. At 25-370 (LFEVKNNGTT…VEECVQDGNN (346 aa)) the chain is on the lumenal side. 10 N-linked (GlcNAc...) asparagine glycosylation sites follow: N31, N52, N58, N70, N78, N97, N101, N115, N159, and N177. A disulfide bridge links C35 with C74. C149 and C185 are disulfide-bonded. The disordered stretch occupies residues 180-207 (KEETHCTQDGPSPTTGPPSPSPPLVPTN). The interval 189–218 (GPSPTTGPPSPSPPLVPTNPTVSKYNVTGN) is hinge. Residues 193–205 (TTGPPSPSPPLVP) show a composition bias toward pro residues. N214, N219, N232, and N240 each carry an N-linked (GlcNAc...) asparagine glycan. Positions 219–370 (NGTCLLASMA…VEECVQDGNN (152 aa)) are second lumenal domain. C222 and C259 are joined by a disulfide. N-linked (GlcNAc...) (high mannose) asparagine glycosylation is present at N252. Residues N282, N296, and N311 are each glycosylated (N-linked (GlcNAc...) asparagine). Residues C327 and C364 are joined by a disulfide bond. The helical transmembrane segment at 371 to 394 (MLIPIAVGGALAGLVLIVLIAYLI) threads the bilayer. Topologically, residues 395-406 (GRKRSHAGYQTI) are cytoplasmic.

The protein belongs to the LAMP family. As to quaternary structure, interacts with ABCB9; this interaction strongly stabilizes ABCB9 and protects ABCB9 against lysosomal degradation. Interacts with FURIN. Interacts with TMEM175; inhibiting the proton channel activity of TMEM175. Post-translationally, O- and N-glycosylated; some of the N-glycans attached to LAMP-1 are polylactosaminoglycans.

The protein localises to the lysosome membrane. Its subcellular location is the endosome membrane. The protein resides in the late endosome membrane. It localises to the cell membrane. It is found in the cytolytic granule membrane. Its function is as follows. Lysosomal membrane glycoprotein which plays an important role in lysosome biogenesis, lysosomal pH regulation, autophagy and cholesterol homeostasis. Acts as an important regulator of lysosomal lumen pH regulation by acting as a direct inhibitor of the proton channel TMEM175, facilitating lysosomal acidification for optimal hydrolase activity. Also plays an important role in NK-cells cytotoxicity. Mechanistically, participates in cytotoxic granule movement to the cell surface and perforin trafficking to the lytic granule. In addition, protects NK-cells from degranulation-associated damage induced by their own cytotoxic granule content. Presents carbohydrate ligands to selectins. Also implicated in tumor cell metastasis. The sequence is that of Lysosome-associated membrane glycoprotein 1 (Lamp1) from Mus musculus (Mouse).